We begin with the raw amino-acid sequence, 196 residues long: RNA pyrophosphohydrolase (196 aa).

Positions 6-149 (GYRPNVGIVI…KRDVYRKVMK (144 aa)) constitute a Nudix hydrolase domain. Residues 38–59 (GGINDNESAEQAMYRELHEEVG) carry the Nudix box motif.

Belongs to the Nudix hydrolase family. RppH subfamily. The cofactor is a divalent metal cation.

Accelerates the degradation of transcripts by removing pyrophosphate from the 5'-end of triphosphorylated RNA, leading to a more labile monophosphorylated state that can stimulate subsequent ribonuclease cleavage. The sequence is that of RNA pyrophosphohydrolase from Haemophilus influenzae (strain ATCC 51907 / DSM 11121 / KW20 / Rd).